The sequence spans 71 residues: Defensin-like protein 124 (71 aa).

A signal peptide spans 1–25 (MSKPTVIVIFMAILVLGMATKETQG). Disulfide bonds link Cys-28/Cys-71, Cys-40/Cys-60, Cys-45/Cys-65, and Cys-49/Cys-67.

This sequence belongs to the DEFL family.

It localises to the secreted. The polypeptide is Defensin-like protein 124 (LCR16) (Arabidopsis thaliana (Mouse-ear cress)).